Reading from the N-terminus, the 508-residue chain is MGLPWYRVHTVVLNDPGRLIAVHIMHTALVSGWAGSMALYELAVFDPSDPILDPMWRQGMFVIPFMTRLGIKDSWGGWSITGETGSNPGIWSYEGVAGAHIVFSGLCFLAAIWHWVYWDLDVFCDSRTGKPSLDLPKIFGIHLFLSGAACFGFGAFHVTGLYGPGIWVSDPYGLTGKIQPVNPAWGAEGFDPFVPGGIASHHIAAGILGILAGLFHLSVRPPQRLYKGLRMGNIETVLSSSIAAVFFAAFIVAGTMWYGSATTPIELFGPTRYQWDQGYFQQEIDRRVRAGLAENLSLSEAWSKIPEKLAFYDYIGNNPAKGGLFRAGAMDNGDGIAVGWLGHPIFKDKNGHELFVRRMPTFFETFPVVLVDEEGIVKADVPFRRAESKYSVEQVGVTVEFYGGELDGVSFGDPAIVKKYARRAQLGEIFELDRATLKSDGVFRSSPRGWFTFGHATFALLFFFGHIWHGARTLFRDVFAGIDPDLDAQVEFGAFQKLGDPTTKRQVV.

A run of 6 helical transmembrane segments spans residues 21-36 (AVHI…WAGS), 101-115 (IVFS…IWHW), 140-156 (GIHL…FGAF), 203-218 (IAAG…FHLS), 237-252 (VLSS…AFIV), and 457-472 (TFAL…HGAR).

Belongs to the PsbB/PsbC family. PsbB subfamily. In terms of assembly, PSII is composed of 1 copy each of membrane proteins PsbA, PsbB, PsbC, PsbD, PsbE, PsbF, PsbH, PsbI, PsbJ, PsbK, PsbL, PsbM, PsbT, PsbX, PsbY, PsbZ, Psb30/Ycf12, at least 3 peripheral proteins of the oxygen-evolving complex and a large number of cofactors. It forms dimeric complexes. Binds multiple chlorophylls. PSII binds additional chlorophylls, carotenoids and specific lipids. serves as cofactor.

The protein localises to the plastid. Its subcellular location is the chloroplast thylakoid membrane. One of the components of the core complex of photosystem II (PSII). It binds chlorophyll and helps catalyze the primary light-induced photochemical processes of PSII. PSII is a light-driven water:plastoquinone oxidoreductase, using light energy to abstract electrons from H(2)O, generating O(2) and a proton gradient subsequently used for ATP formation. In Cryptomeria japonica (Japanese cedar), this protein is Photosystem II CP47 reaction center protein.